The following is a 515-amino-acid chain: MRKINIFDTTLRDGEQSAGINLNLQEKLEIARQLERLGVDIIEAGFPASSKGDFQAVKQIAETIKTCSVTGLARSVQSDIDAAWEALKGGAEPRLHLFIATSPIHMKYKLQMTPEQVIETAVESVKYAKRYFPIVQWSAEDACRSELPFLAKIITEVIKAGATVINIPDTVGYITPKEYGNIFTFLSNNVPNIEKVSLSAHCHDDLGMAVANSLAAIEHGATQIEGTINGIGERAGNAALEEIAVALYIRKDYYQAETRLNLQEIKRTSNLVSKLTGVVIPPNKAVIGKNAFAHESGIHQDGVLKEKTTYEIISPELVGVQSNSMVLGKHSGRHALRNRVEELGYTLSDEEVNKLFVRFKELADKKKDITDDDLVALIFEEKFDHFKDFYQLSSLQVQYGTNQIPTAVVVLKDGQGNEIQEAATGAGSVEALYNTLERCFKTSVTLLDYRIESVSGGRDALAQVFVKVRVNDIETSGRGTAQDVLEASAKAYINAVNRVFMIETMRAENQKVAMQ.

In terms of domain architecture, Pyruvate carboxyltransferase spans 4 to 266; sequence INIFDTTLRD…ETRLNLQEIK (263 aa). Mn(2+) is bound by residues Asp-13, His-201, His-203, and Asn-237. Residues 391–515 are regulatory domain; it reads QLSSLQVQYG…RAENQKVAMQ (125 aa).

This sequence belongs to the alpha-IPM synthase/homocitrate synthase family. LeuA type 1 subfamily. As to quaternary structure, homodimer. The cofactor is Mn(2+).

It localises to the cytoplasm. It carries out the reaction 3-methyl-2-oxobutanoate + acetyl-CoA + H2O = (2S)-2-isopropylmalate + CoA + H(+). Its pathway is amino-acid biosynthesis; L-leucine biosynthesis; L-leucine from 3-methyl-2-oxobutanoate: step 1/4. Catalyzes the condensation of the acetyl group of acetyl-CoA with 3-methyl-2-oxobutanoate (2-ketoisovalerate) to form 3-carboxy-3-hydroxy-4-methylpentanoate (2-isopropylmalate). This is 2-isopropylmalate synthase from Geobacillus sp. (strain WCH70).